The primary structure comprises 2209 residues: RNA-directed RNA polymerase L (2209 aa).

Positions 26–284 are endonuclease; it reads KVTFLSQVHP…AHLDSDVSSC (259 aa). Mn(2+) is bound by residues Glu-51, Asp-89, and Glu-102. Residue Lys-115 is part of the active site. Residues 1172–1369 form the RdRp catalytic domain; it reads CDMKMAVNNG…FLSSKLNKFV (198 aa). Asp-1330 lines the Mg(2+) pocket.

Belongs to the Bunyavirales RNA polymerase family. Homomultimer; the oligomeric structure is essential for the polymerase activity. Interacts with nucleoprotein N. Interacts with protein Z; this interaction inhibits viral transcription and replication, Z partially blocks the product exit tunnel for the releasing nascent RNA product. Mn(2+) is required as a cofactor. Mg(2+) serves as cofactor.

It is found in the virion. The protein localises to the host cytoplasm. It carries out the reaction RNA(n) + a ribonucleoside 5'-triphosphate = RNA(n+1) + diphosphate. In terms of biological role, RNA-dependent RNA polymerase, which is responsible for the replication and transcription of the viral RNA genome using antigenomic RNA as an intermediate. During transcription, synthesizes subgenomic RNAs and assures their capping by a cap-snatching mechanism, which involves the endonuclease activity cleaving the host capped pre-mRNAs. These short capped RNAs are then used as primers for viral transcription. The 3'-end of subgenomic mRNAs molecules are heterogeneous and not polyadenylated. The replicase function is to direct synthesis of antigenomic and genomic RNA which are encapsidated and non capped. As a consequence of the use of the same enzyme for both transcription and replication, these mechanisms need to be well coordinated. These processes may be regulated by proteins N and Z in a dose-dependent manner. Z protein inhibits the viral polymerase L und thus the viral transcription and RNA synthesis. The chain is RNA-directed RNA polymerase L from Calomys callosus (Large vesper mouse).